Consider the following 373-residue polypeptide: tRNA (guanine(26)-N(2))-dimethyltransferase (373 aa).

The region spanning lysine 2–isoleucine 365 is the Trm1 methyltransferase domain. The S-adenosyl-L-methionine site is built by arginine 35, arginine 66, aspartate 86, aspartate 113, and alanine 114.

This sequence belongs to the class I-like SAM-binding methyltransferase superfamily. Trm1 family.

The catalysed reaction is guanosine(26) in tRNA + 2 S-adenosyl-L-methionine = N(2)-dimethylguanosine(26) in tRNA + 2 S-adenosyl-L-homocysteine + 2 H(+). In terms of biological role, dimethylates a single guanine residue at position 26 of a number of tRNAs using S-adenosyl-L-methionine as donor of the methyl groups. The polypeptide is tRNA (guanine(26)-N(2))-dimethyltransferase (Methanococcus maripaludis (strain C6 / ATCC BAA-1332)).